A 173-amino-acid chain; its full sequence is Ribosome maturation factor RimM (173 aa).

A PRC barrel domain is found at 93–166; sequence EDEYLVSDMI…KMLVDTIEGM (74 aa).

The protein belongs to the RimM family. In terms of assembly, binds ribosomal protein uS19.

It localises to the cytoplasm. Functionally, an accessory protein needed during the final step in the assembly of 30S ribosomal subunit, possibly for assembly of the head region. Essential for efficient processing of 16S rRNA. May be needed both before and after RbfA during the maturation of 16S rRNA. It has affinity for free ribosomal 30S subunits but not for 70S ribosomes. The protein is Ribosome maturation factor RimM of Fusobacterium nucleatum subsp. nucleatum (strain ATCC 25586 / DSM 15643 / BCRC 10681 / CIP 101130 / JCM 8532 / KCTC 2640 / LMG 13131 / VPI 4355).